The following is a 210-amino-acid chain: Putative O-methyltransferase MSMEG_5073/MSMEI_4947 (210 aa).

Residues Val-37, Glu-59, 61-62, Ser-67, Asp-85, and Val-86 contribute to the S-adenosyl-L-methionine site; that span reads GT. Residue Asp-133 participates in substrate binding. Asp-135 is an S-adenosyl-L-methionine binding site.

It belongs to the class I-like SAM-binding methyltransferase superfamily. Cation-dependent O-methyltransferase family.

This Mycolicibacterium smegmatis (strain ATCC 700084 / mc(2)155) (Mycobacterium smegmatis) protein is Putative O-methyltransferase MSMEG_5073/MSMEI_4947.